A 271-amino-acid polypeptide reads, in one-letter code: Putative phosphoenolpyruvate synthase regulatory protein (271 aa).

An ADP-binding site is contributed by 152-159; sequence GVSRSGKT.

The protein belongs to the pyruvate, phosphate/water dikinase regulatory protein family. PSRP subfamily.

It catalyses the reaction [pyruvate, water dikinase] + ADP = [pyruvate, water dikinase]-phosphate + AMP + H(+). It carries out the reaction [pyruvate, water dikinase]-phosphate + phosphate + H(+) = [pyruvate, water dikinase] + diphosphate. In terms of biological role, bifunctional serine/threonine kinase and phosphorylase involved in the regulation of the phosphoenolpyruvate synthase (PEPS) by catalyzing its phosphorylation/dephosphorylation. The polypeptide is Putative phosphoenolpyruvate synthase regulatory protein (Dichelobacter nodosus (strain VCS1703A)).